We begin with the raw amino-acid sequence, 247 residues long: Mast cell protease 2 (247 aa).

The signal sequence occupies residues 1-19; sequence MHLLALHLLLFLLGSRAKA. The propeptide at 20–21 is activation peptide; sequence GE. The Peptidase S1 domain occupies 22–245; that stretch reads IIGGTECKPH…YRPWINKILR (224 aa). The cysteines at positions 51 and 67 are disulfide-linked. H66 acts as the Charge relay system in catalysis. A glycan (N-linked (GlcNAc...) asparagine) is linked at N80. Residue D110 is the Charge relay system of the active site. 2 disulfides stabilise this stretch: C144–C209 and C175–C188. The active-site Charge relay system is the S203.

This sequence belongs to the peptidase S1 family. Granzyme subfamily.

The polypeptide is Mast cell protease 2 (Meriones unguiculatus (Mongolian jird)).